The chain runs to 293 residues: N-acetylneuraminate lyase (293 aa).

Serine 48 and serine 49 together coordinate aceneuramate. Tyrosine 137 serves as the catalytic Proton donor. Lysine 165 serves as the catalytic Schiff-base intermediate with substrate. Aceneuramate contacts are provided by threonine 167, glycine 189, aspartate 191, glutamate 192, and serine 208.

This sequence belongs to the DapA family. NanA subfamily. As to quaternary structure, homotetramer.

The protein localises to the cytoplasm. The enzyme catalyses aceneuramate = aldehydo-N-acetyl-D-mannosamine + pyruvate. It participates in amino-sugar metabolism; N-acetylneuraminate degradation; D-fructose 6-phosphate from N-acetylneuraminate: step 1/5. In terms of biological role, catalyzes the reversible aldol cleavage of N-acetylneuraminic acid (sialic acid; Neu5Ac) to form pyruvate and N-acetylmannosamine (ManNAc) via a Schiff base intermediate. This is N-acetylneuraminate lyase from Staphylococcus carnosus (strain TM300).